Reading from the N-terminus, the 159-residue chain is MPSFDVVSELDKHEVTNAVDNAIKELDRRYDLKGKGTFEFKELTVTLTAEADFQLEAMIEILKLALVKRKIDAKCLEIKDAYASGKLMKQEVILREGIDKELAKKIVAHIKEAKLKVQAAIQGEQVRVTGKKRDDLQEAIAALRAYDSGMPLQFNNFRD.

This sequence belongs to the YajQ family.

Its function is as follows. Nucleotide-binding protein. In Pseudomonas syringae pv. syringae (strain B728a), this protein is Nucleotide-binding protein Psyr_4087.